We begin with the raw amino-acid sequence, 231 residues long: MLAQLKKEVFEANLALPKHHLVTFTWGNVSAIDREKNLVVIKPSGVDYDVMTENDMVVVDLFTGNIVEGNKKPSSDTPTHLELYRQFPHIGGIVHTHSRHATIWAQAGLDIIEVGTTHGDYFYGTIPCTRQMTTKEIKGNYELETGKVIVETFLSRGIEPDNIPAVLVHSHGPFAWGKDANNAVHNAVVLEEVAYMNLFSQQLNPYLSPMQKDLLDKHYLRKHGQNAYYGQ.

Substrate contacts are provided by residues 27 to 28 (GN), 44 to 45 (SG), and 74 to 75 (SS). Residues aspartate 76, histidine 95, and histidine 97 each coordinate Zn(2+). Aspartate 120 acts as the Proton donor/acceptor in catalysis. Residue histidine 171 coordinates Zn(2+). Tyrosine 229 serves as the catalytic Proton donor/acceptor.

Belongs to the aldolase class II family. AraD/FucA subfamily. Zn(2+) serves as cofactor.

The catalysed reaction is L-ribulose 5-phosphate = D-xylulose 5-phosphate. Its function is as follows. Catalyzes the interconversion of L-ribulose 5-phosphate (LRu5P) and D-xylulose 5-phosphate (D-Xu5P) via a retroaldol/aldol mechanism (carbon-carbon bond cleavage analogous to a class II aldolase reaction). May be involved in the utilization of 2,3-diketo-L-gulonate. The protein is L-ribulose-5-phosphate 4-epimerase SgbE of Haemophilus influenzae (strain ATCC 51907 / DSM 11121 / KW20 / Rd).